The following is a 150-amino-acid chain: Histone H3-like centromeric protein A (150 aa).

The segment at 1-56 is disordered; sequence MRPGSTPASRRKSRPPRRVSPPLPTTSTRSPGRPSAPEQRKAPRATPKKRFRPGTR. Residues 25 to 37 are compositionally biased toward low complexity; it reads TTSTRSPGRPSAP. The segment covering 42–53 has biased composition (basic residues); it reads APRATPKKRFRP. The segment at 53–150 is H3-like; that stretch reads PGTRALMEIR…RIRGVTEGLG (98 aa).

The protein belongs to the histone H3 family. Component of centromeric nucleosomes, where DNA is wrapped around a histone octamer core. The octamer contains two molecules each of H2A, H2B, CENPA and H4 assembled in one CENPA-H4 heterotetramer and two H2A-H2B heterodimers. CENPA modulates the DNA-binding characteristics of nucleosomes so that protruding DNA ends have higher flexibility than in nucleosomes containing conventional histone H3.

The protein resides in the nucleus. The protein localises to the chromosome. Its subcellular location is the centromere. Its function is as follows. Histone H3-like nucleosomal protein that is specifically found in centromeric nucleosomes. Replaces conventional H3 in the nucleosome core of centromeric chromatin that serves as an assembly site for the inner kinetochore. The presence of CENPA subtly modifies the nucleosome structure and the way DNA is wrapped around the nucleosome and gives rise to protruding DNA ends that are less well-ordered and rigid compared to nucleosomes containing histone H3. May serve as an epigenetic mark that propagates centromere identity through replication and cell division. Required for recruitment and assembly of kinetochore proteins, and as a consequence required for progress through mitosis, chromosome segregation and cytokinesis. The polypeptide is Histone H3-like centromeric protein A (cenpa) (Xenopus tropicalis (Western clawed frog)).